Here is a 788-residue protein sequence, read N- to C-terminus: MDASLEKIADPTLAEMGKNLKEAVKMLEDSQRRTEEENGKKLISGDIPGPLQGSGQDMVSILQLVQNLMHGDEDEEPQSPRIQNIGEQGHMALLGHSLGAYISTLDKEKLRKLTTRILSDTTLWLCRIFRYENGCAYFHEEEREGLAKICRLAIHSRYEDFVVDGFNVLYNKKPVIYLSAAARPGLGQYLCNQLGLPFPCLCRVPCNTVFGSQHQMDVAFLEKLIKDDIERGRLPLLLVANAGTAAVGHTDKIGRLKELCEQYGIWLHVEGVNLATLALGYVSSSVLAAAKCDSMTMTPGPWLGLPAVPAVTLYKHDDPALTLVAGLTSNKPTDKLRALPLWLSLQYLGLDGFVERIKHACQLSQRLQESLKKVNYIKILVEDELSSPVVVFRFFQELPGSDPVFKAVPVPNMTPSGVGRERHSCDALNRWLGEQLKQLVPASGLTVMDLEAEGTCLRFSPLMTAAVLGTRGEDVDQLVACIESKLPVLCCTLQLREEFKQEVEATAGLLYVDDPNWSGIGVVRYEHANDDKSSLKSDPEGENIHAGLLKKLNELESDLTFKIGPEYKSMKSCLYVGMASDNVDAAELVETIAATAREIEENSRLLENMTEVVRKGIQEAQVELQKASEERLLEEGVLRQIPVVGSVLNWFSPVQALQKGRTFNLTAGSLESTEPIYVYKAQGAGVTLPPTPSGSRTKQRLPGQKPFKRSLRGSDALSETSSVSHIEDLEKVERLSSGPEQITLEASSTEGHPGAPSPQHTDQTEAFQKGVPHPEDDHSQVEGPESLR.

Residues 28–40 are compositionally biased toward basic and acidic residues; sequence EDSQRRTEEENGK. The disordered stretch occupies residues 28-51; it reads EDSQRRTEEENGKKLISGDIPGPL. Threonine 414 bears the Phosphothreonine mark. Residue serine 652 is modified to Phosphoserine. Positions 684–788 are disordered; it reads AGVTLPPTPS…SQVEGPESLR (105 aa). Phosphothreonine is present on residues threonine 687 and threonine 691. Residues serine 710, serine 718, and serine 722 each carry the phosphoserine modification. The span at 725–734 shows a compositional bias: basic and acidic residues; the sequence is HIEDLEKVER. The segment covering 738-750 has biased composition (polar residues); the sequence is GPEQITLEASSTE. Serine 748, serine 757, serine 779, and serine 786 each carry phosphoserine. Positions 772 to 788 are enriched in basic and acidic residues; sequence PHPEDDHSQVEGPESLR.

Belongs to the group II decarboxylase family. The cofactor is pyridoxal 5'-phosphate.

The chain is Pyridoxal-dependent decarboxylase domain-containing protein 1 (PDXDC1) from Homo sapiens (Human).